The following is a 105-amino-acid chain: Met repressor (105 aa).

It belongs to the MetJ family. Homodimer.

The protein resides in the cytoplasm. Its function is as follows. This regulatory protein, when combined with SAM (S-adenosylmethionine) represses the expression of the methionine regulon and of enzymes involved in SAM synthesis. The sequence is that of Met repressor from Vibrio cholerae serotype O1 (strain ATCC 39541 / Classical Ogawa 395 / O395).